We begin with the raw amino-acid sequence, 32 residues long: Ribulose bisphosphate carboxylase/oxygenase activase, chloroplastic (32 aa).

Residues 13–32 (FGALREGPPTFEQPAMTIEK) form a disordered region.

This sequence belongs to the RuBisCO activase family.

It localises to the plastid. It is found in the chloroplast stroma. Functionally, activation of RuBisCO (ribulose-1,5-bisphosphate carboxylase/oxygenase; EC 4.1.1.39) involves the ATP-dependent carboxylation of the epsilon-amino group of lysine leading to a carbamate structure. In Populus euphratica (Euphrates poplar), this protein is Ribulose bisphosphate carboxylase/oxygenase activase, chloroplastic.